The primary structure comprises 203 residues: Orotate phosphoribosyltransferase (203 aa).

5-phospho-alpha-D-ribose 1-diphosphate contacts are provided by residues arginine 94, lysine 98, histidine 100, and 120-128; that span reads EDLISTGGS. Residue serine 124 participates in orotate binding.

Belongs to the purine/pyrimidine phosphoribosyltransferase family. PyrE subfamily. In terms of assembly, homodimer. The cofactor is Mg(2+).

It catalyses the reaction orotidine 5'-phosphate + diphosphate = orotate + 5-phospho-alpha-D-ribose 1-diphosphate. Its pathway is pyrimidine metabolism; UMP biosynthesis via de novo pathway; UMP from orotate: step 1/2. Functionally, catalyzes the transfer of a ribosyl phosphate group from 5-phosphoribose 1-diphosphate to orotate, leading to the formation of orotidine monophosphate (OMP). The protein is Orotate phosphoribosyltransferase of Staphylococcus saprophyticus subsp. saprophyticus (strain ATCC 15305 / DSM 20229 / NCIMB 8711 / NCTC 7292 / S-41).